Consider the following 824-residue polypeptide: Leucine--tRNA ligase (824 aa).

Positions 42–52 match the 'HIGH' region motif; that stretch reads PYPSGRIHMGH. The 'KMSKS' region signature appears at 581–585; it reads KMSKS. Residue K584 participates in ATP binding.

The protein belongs to the class-I aminoacyl-tRNA synthetase family.

The protein resides in the cytoplasm. The enzyme catalyses tRNA(Leu) + L-leucine + ATP = L-leucyl-tRNA(Leu) + AMP + diphosphate. The sequence is that of Leucine--tRNA ligase from Geotalea uraniireducens (strain Rf4) (Geobacter uraniireducens).